The chain runs to 713 residues: Glutamine--fructose-6-phosphate aminotransferase [isomerizing] (713 aa).

The For GATase activity role is filled by Cys2. The region spanning Cys2–Gly316 is the Glutamine amidotransferase type-2 domain. SIS domains follow at residues Trp389–Ser528 and Cys561–Pro703.

Homotetramer.

It carries out the reaction D-fructose 6-phosphate + L-glutamine = D-glucosamine 6-phosphate + L-glutamate. Its pathway is nucleotide-sugar biosynthesis; UDP-N-acetyl-alpha-D-glucosamine biosynthesis; alpha-D-glucosamine 6-phosphate from D-fructose 6-phosphate: step 1/1. In terms of biological role, involved in amino sugar synthesis (formation of chitin, supplies the amino sugars of asparagine-linked oligosaccharides of glycoproteins). The protein is Glutamine--fructose-6-phosphate aminotransferase [isomerizing] (GFA1) of Candida albicans (strain SC5314 / ATCC MYA-2876) (Yeast).